Consider the following 199-residue polypeptide: Recombination protein RecR (199 aa).

The C4-type zinc finger occupies 56–71; that stretch reads CTVCFNVTEQETCNIC. The Toprim domain occupies 79 to 174; sequence SVICVVEESK…TVTRLASGLP (96 aa).

Belongs to the RecR family.

Functionally, may play a role in DNA repair. It seems to be involved in an RecBC-independent recombinational process of DNA repair. It may act with RecF and RecO. This Paenarthrobacter aurescens (strain TC1) protein is Recombination protein RecR.